The primary structure comprises 385 residues: Alkanesulfonate monooxygenase 2 (385 aa).

Belongs to the SsuD family.

It carries out the reaction an alkanesulfonate + FMNH2 + O2 = an aldehyde + FMN + sulfite + H2O + 2 H(+). Its function is as follows. Catalyzes the desulfonation of aliphatic sulfonates. This is Alkanesulfonate monooxygenase 2 (ssuD2) from Mesorhizobium japonicum (strain LMG 29417 / CECT 9101 / MAFF 303099) (Mesorhizobium loti (strain MAFF 303099)).